Consider the following 320-residue polypeptide: Putative thiosulfate sulfurtransferase (320 aa).

The N-terminal stretch at 1–37 is a signal peptide; it reads MSVRSLRWPRQKAFLAVISLVVAVLLAVPGWLTPATA. 2 Rhodanese domains span residues 56–166 and 194–315; these read NNKQ…PVTK and LTGK…PVET. C274 (cysteine persulfide intermediate) is an active-site residue.

It localises to the periplasm. The enzyme catalyses thiosulfate + hydrogen cyanide = thiocyanate + sulfite + 2 H(+). Its function is as follows. May be a sulfotransferase involved in the transport of sulfate. Displays very low rhodanese activity. The protein is Putative thiosulfate sulfurtransferase (rhdA) of Synechococcus elongatus (strain ATCC 33912 / PCC 7942 / FACHB-805) (Anacystis nidulans R2).